The sequence spans 260 residues: Small ribosomal subunit protein uS2 (260 aa).

Belongs to the universal ribosomal protein uS2 family.

In Streptococcus gordonii (strain Challis / ATCC 35105 / BCRC 15272 / CH1 / DL1 / V288), this protein is Small ribosomal subunit protein uS2.